Reading from the N-terminus, the 311-residue chain is Ornithine carbamoyltransferase (311 aa).

Carbamoyl phosphate is bound by residues 54–57 (STRT), Q81, R105, and 132–135 (HPCQ). Residues N163, D221, and 225 to 226 (SM) each bind L-ornithine. Carbamoyl phosphate is bound by residues 261–262 (CL) and R289.

This sequence belongs to the aspartate/ornithine carbamoyltransferase superfamily. OTCase family.

It is found in the cytoplasm. It carries out the reaction carbamoyl phosphate + L-ornithine = L-citrulline + phosphate + H(+). It functions in the pathway amino-acid degradation; L-arginine degradation via ADI pathway; carbamoyl phosphate from L-arginine: step 2/2. Functionally, reversibly catalyzes the transfer of the carbamoyl group from carbamoyl phosphate (CP) to the N(epsilon) atom of ornithine (ORN) to produce L-citrulline. The chain is Ornithine carbamoyltransferase from Azoarcus sp. (strain BH72).